Reading from the N-terminus, the 328-residue chain is 4-hydroxy-3-methylbut-2-enyl diphosphate reductase (328 aa).

Cys-24 is a binding site for [4Fe-4S] cluster. (2E)-4-hydroxy-3-methylbut-2-enyl diphosphate is bound by residues His-55 and His-88. Dimethylallyl diphosphate-binding residues include His-55 and His-88. The isopentenyl diphosphate site is built by His-55 and His-88. Residue Cys-110 participates in [4Fe-4S] cluster binding. His-138 lines the (2E)-4-hydroxy-3-methylbut-2-enyl diphosphate pocket. Position 138 (His-138) interacts with dimethylallyl diphosphate. His-138 is a binding site for isopentenyl diphosphate. The Proton donor role is filled by Glu-140. Residue Thr-178 participates in (2E)-4-hydroxy-3-methylbut-2-enyl diphosphate binding. Cys-208 contributes to the [4Fe-4S] cluster binding site. (2E)-4-hydroxy-3-methylbut-2-enyl diphosphate is bound by residues Ser-236, Ser-237, Asn-238, and Ser-279. Positions 236, 237, 238, and 279 each coordinate dimethylallyl diphosphate. 4 residues coordinate isopentenyl diphosphate: Ser-236, Ser-237, Asn-238, and Ser-279.

It belongs to the IspH family. [4Fe-4S] cluster serves as cofactor.

It carries out the reaction isopentenyl diphosphate + 2 oxidized [2Fe-2S]-[ferredoxin] + H2O = (2E)-4-hydroxy-3-methylbut-2-enyl diphosphate + 2 reduced [2Fe-2S]-[ferredoxin] + 2 H(+). The enzyme catalyses dimethylallyl diphosphate + 2 oxidized [2Fe-2S]-[ferredoxin] + H2O = (2E)-4-hydroxy-3-methylbut-2-enyl diphosphate + 2 reduced [2Fe-2S]-[ferredoxin] + 2 H(+). The protein operates within isoprenoid biosynthesis; dimethylallyl diphosphate biosynthesis; dimethylallyl diphosphate from (2E)-4-hydroxy-3-methylbutenyl diphosphate: step 1/1. It functions in the pathway isoprenoid biosynthesis; isopentenyl diphosphate biosynthesis via DXP pathway; isopentenyl diphosphate from 1-deoxy-D-xylulose 5-phosphate: step 6/6. Functionally, catalyzes the conversion of 1-hydroxy-2-methyl-2-(E)-butenyl 4-diphosphate (HMBPP) into a mixture of isopentenyl diphosphate (IPP) and dimethylallyl diphosphate (DMAPP). Acts in the terminal step of the DOXP/MEP pathway for isoprenoid precursor biosynthesis. The chain is 4-hydroxy-3-methylbut-2-enyl diphosphate reductase from Ehrlichia ruminantium (strain Gardel).